The primary structure comprises 206 residues: N-(5'-phosphoribosyl)anthranilate isomerase (206 aa).

Belongs to the TrpF family.

It carries out the reaction N-(5-phospho-beta-D-ribosyl)anthranilate = 1-(2-carboxyphenylamino)-1-deoxy-D-ribulose 5-phosphate. Its pathway is amino-acid biosynthesis; L-tryptophan biosynthesis; L-tryptophan from chorismate: step 3/5. In Pseudomonas syringae pv. syringae (strain B728a), this protein is N-(5'-phosphoribosyl)anthranilate isomerase.